The following is a 133-amino-acid chain: Large ribosomal subunit protein uL16c (133 aa).

This sequence belongs to the universal ribosomal protein uL16 family. In terms of assembly, part of the 50S ribosomal subunit.

Its subcellular location is the plastid. It localises to the chloroplast. The chain is Large ribosomal subunit protein uL16c from Liriodendron tulipifera (Tuliptree).